The chain runs to 375 residues: Tyrosine--tRNA ligase (375 aa).

L-tyrosine is bound by residues tyrosine 37, tyrosine 168, glutamine 172, aspartate 175, and glutamine 190. A 'KMSKS' region motif is present at residues 251–255; it reads KMSKS. Lysine 254 lines the ATP pocket.

The protein belongs to the class-I aminoacyl-tRNA synthetase family. TyrS type 4 subfamily. In terms of assembly, homodimer.

It localises to the cytoplasm. It carries out the reaction tRNA(Tyr) + L-tyrosine + ATP = L-tyrosyl-tRNA(Tyr) + AMP + diphosphate + H(+). In terms of biological role, catalyzes the attachment of tyrosine to tRNA(Tyr) in a two-step reaction: tyrosine is first activated by ATP to form Tyr-AMP and then transferred to the acceptor end of tRNA(Tyr). This Thermococcus sibiricus (strain DSM 12597 / MM 739) protein is Tyrosine--tRNA ligase.